A 67-amino-acid chain; its full sequence is Protein AaeX (67 aa).

2 consecutive transmembrane segments (helical) span residues 3–23 and 43–63; these read LFPVIVVFGLSFPPIFFELLL and FVWHPALFNTALYCCLFYLIS.

This sequence belongs to the AaeX family.

It localises to the cell membrane. This is Protein AaeX from Salmonella agona (strain SL483).